A 666-amino-acid chain; its full sequence is Putative cysteine-rich receptor-like protein kinase 31 (666 aa).

Positions 1–23 are cleaved as a signal peptide; it reads MCLNTLCAILCFVLTVSFGFVSA. Gnk2-homologous domains lie at 24–130 and 136–245; these read QKCG…NNSF and LEPT…GYKY. Residues 24 to 280 are Extracellular-facing; the sequence is QKCGESVFFR…PDGKKISTGV (257 aa). N-linked (GlcNAc...) asparagine glycosylation is found at asparagine 52, asparagine 62, asparagine 104, asparagine 127, and asparagine 151. A helical membrane pass occupies residues 281 to 301; it reads IVAIVVSAVIFVVLVALGLVI. Over 302–666 the chain is Cytoplasmic; that stretch reads WKRRQSYKTL…SASITRATPR (365 aa). The Protein kinase domain occupies 339–616; it reads FSRNNKLGQG…IFQMLTNSSI (278 aa). ATP-binding positions include 345–353 and lysine 367; that span reads LGQGGFGEV. At tyrosine 412 the chain carries Phosphotyrosine. Catalysis depends on aspartate 464, which acts as the Proton acceptor. A Phosphoserine modification is found at serine 468. Threonine 504 bears the Phosphothreonine mark. Tyrosine 512 is subject to Phosphotyrosine.

It belongs to the protein kinase superfamily. Ser/Thr protein kinase family. CRK subfamily.

Its subcellular location is the membrane. It catalyses the reaction L-seryl-[protein] + ATP = O-phospho-L-seryl-[protein] + ADP + H(+). The enzyme catalyses L-threonyl-[protein] + ATP = O-phospho-L-threonyl-[protein] + ADP + H(+). The chain is Putative cysteine-rich receptor-like protein kinase 31 (CRK31) from Arabidopsis thaliana (Mouse-ear cress).